The primary structure comprises 395 residues: ATP phosphoribosyltransferase regulatory subunit (395 aa).

This sequence belongs to the class-II aminoacyl-tRNA synthetase family. HisZ subfamily. As to quaternary structure, heteromultimer composed of HisG and HisZ subunits.

It is found in the cytoplasm. Its pathway is amino-acid biosynthesis; L-histidine biosynthesis; L-histidine from 5-phospho-alpha-D-ribose 1-diphosphate: step 1/9. Required for the first step of histidine biosynthesis. May allow the feedback regulation of ATP phosphoribosyltransferase activity by histidine. In Pseudomonas fluorescens (strain ATCC BAA-477 / NRRL B-23932 / Pf-5), this protein is ATP phosphoribosyltransferase regulatory subunit.